Consider the following 430-residue polypeptide: DD-carboxypeptidase/endopeptidase Mpg (430 aa).

3 residues coordinate Zn(2+): His295, Asp299, and His375.

Belongs to the peptidase M23B family. As to quaternary structure, monomer. It depends on Zn(2+) as a cofactor. Post-translationally, likely to be synthesized as a proenzyme. The cleavage of the N-terminal domain is probably required for the activation of the enzyme.

It localises to the cell outer membrane. In terms of biological role, has both endopeptidase and DD-carboxypeptidase activities. Degrades cell wall peptidoglycan (PG) to allow consummate expression of pili. This is DD-carboxypeptidase/endopeptidase Mpg from Neisseria meningitidis serogroup B (strain ATCC 13091 / M2091).